We begin with the raw amino-acid sequence, 287 residues long: Putative sugar uptake protein LJ_0170 (287 aa).

A run of 10 helical transmembrane segments spans residues 4–23 (VYLFLPAIGWGLMPLVIASV), 28–50 (VYNQIVGTVAASFIFGAIVMAIM), 56–78 (WSLFLLSALGGACWVIGQVGQYI), 91–108 (ISTGLQLIGVPLVGVLAF), 118–137 (LYGFIGILVLIIGVVLTSFT), 150–169 (VSTIILLVLTSLGYITSSSI), 179–198 (SIFFGQTFGMLVAVFIYTLV), 211–230 (VQSGGAGILYAIAALAYILS), 240–259 (FVISQLCVVISTLGGLIFLH), and 266–285 (GLIFTIAGLILIIGGAMLTT).

Belongs to the GRP transporter (TC 2.A.7.5) family.

The protein resides in the cell membrane. This Lactobacillus johnsonii (strain CNCM I-12250 / La1 / NCC 533) protein is Putative sugar uptake protein LJ_0170.